Reading from the N-terminus, the 369-residue chain is 2-aminoethylphosphonate--pyruvate transaminase (369 aa).

N6-(pyridoxal phosphate)lysine is present on K193.

It belongs to the class-V pyridoxal-phosphate-dependent aminotransferase family. PhnW subfamily. In terms of assembly, homodimer. Pyridoxal 5'-phosphate is required as a cofactor.

The catalysed reaction is (2-aminoethyl)phosphonate + pyruvate = phosphonoacetaldehyde + L-alanine. Its function is as follows. Involved in phosphonate degradation. The protein is 2-aminoethylphosphonate--pyruvate transaminase of Burkholderia pseudomallei (strain 1106a).